Consider the following 222-residue polypeptide: Vacuolar protein sorting-associated protein 2 homolog 2 (222 aa).

2 coiled-coil regions span residues 26-83 (RGIE…AQIR) and 143-222 (SEAI…LRRI). The tract at residues 179 to 222 (SSAPKGRIATKTAAPPASTAATNKNSESSEVDELEKRLASLRRI) is disordered. Residues 187–203 (ATKTAAPPASTAATNKN) are compositionally biased toward low complexity.

It belongs to the SNF7 family. Component of the endosomal sorting required for transport complex III (ESCRT-III), composed at least of VPS2, VPS20, VPS24 and VPS32. Interacts with CHMP1A, CHMP1B and VPS60-1.

It localises to the endosome. Functionally, component of the ESCRT-III complex, which is required for multivesicular bodies (MVBs) formation and sorting of endosomal cargo proteins into MVBs. The ESCRT-III complex is probably involved in the concentration of MVB cargo. This chain is Vacuolar protein sorting-associated protein 2 homolog 2 (VPS2.2), found in Arabidopsis thaliana (Mouse-ear cress).